The primary structure comprises 97 residues: Large ribosomal subunit protein eL21 (97 aa).

The protein belongs to the eukaryotic ribosomal protein eL21 family.

In Methanococcus vannielii (strain ATCC 35089 / DSM 1224 / JCM 13029 / OCM 148 / SB), this protein is Large ribosomal subunit protein eL21.